Here is a 429-residue protein sequence, read N- to C-terminus: MIRSHVSADTMNLNSSRSLYERAKRLMPGGVSSPVRAIRPYPFYVKRAEGPYLWDEDGNSFIDYCLAYGPMILGHRNPEVMRKVEEQIERGWLYGTPTALEVELAERIISHYPSIEMIRFVSTGTEATMAALRIARGFTGKDKIVKIEGGFHGAHDSVLVKAGSGATTIGVPDSKGVPADTAKNTVLVPYNDIQAMEAALREDDVAAVIMEPVLGNIGPVLPMDGYLEGVRRITEEHDALLIFDEVITGFRLALGGAQSYYRVRADITTLGKIIGGGFPIGAVGGRREIMENVAPQGGIYQAGTFNGSPVSMAAGLATLDILERGVLDRINEMGSYLRKGISDIVEDLKLDYSVSGVASMFKVFFGPLPRNYSEALRCDKEGYLRFFWRMLEAGIFLTPSQYETDFISASHDKEIIDKTLEAFKLFLKG.

Position 272 is an N6-(pyridoxal phosphate)lysine (K272).

Belongs to the class-III pyridoxal-phosphate-dependent aminotransferase family. HemL subfamily. Pyridoxal 5'-phosphate serves as cofactor.

It localises to the cytoplasm. It catalyses the reaction (S)-4-amino-5-oxopentanoate = 5-aminolevulinate. It participates in porphyrin-containing compound metabolism; protoporphyrin-IX biosynthesis; 5-aminolevulinate from L-glutamyl-tRNA(Glu): step 2/2. The protein is Glutamate-1-semialdehyde 2,1-aminomutase of Methanothrix thermoacetophila (strain DSM 6194 / JCM 14653 / NBRC 101360 / PT) (Methanosaeta thermophila).